Here is a 176-residue protein sequence, read N- to C-terminus: SsrA-binding protein (176 aa).

Positions 1–33 are disordered; the sequence is MTEAGAKKAAGKKSGKGKGKNAKKNQPNITPVA. Over residues 9–23 the composition is skewed to basic residues; that stretch reads AAGKKSGKGKGKNAK.

This sequence belongs to the SmpB family.

The protein resides in the cytoplasm. Required for rescue of stalled ribosomes mediated by trans-translation. Binds to transfer-messenger RNA (tmRNA), required for stable association of tmRNA with ribosomes. tmRNA and SmpB together mimic tRNA shape, replacing the anticodon stem-loop with SmpB. tmRNA is encoded by the ssrA gene; the 2 termini fold to resemble tRNA(Ala) and it encodes a 'tag peptide', a short internal open reading frame. During trans-translation Ala-aminoacylated tmRNA acts like a tRNA, entering the A-site of stalled ribosomes, displacing the stalled mRNA. The ribosome then switches to translate the ORF on the tmRNA; the nascent peptide is terminated with the 'tag peptide' encoded by the tmRNA and targeted for degradation. The ribosome is freed to recommence translation, which seems to be the essential function of trans-translation. The chain is SsrA-binding protein from Rhodopirellula baltica (strain DSM 10527 / NCIMB 13988 / SH1).